Reading from the N-terminus, the 206-residue chain is Large ribosomal subunit protein uL4 (206 aa).

A disordered region spans residues 48–97 (THAVKNRSLVSGGGKKPWKQKHTGRARQGSTRASQWVGGGKAMGPKPRDY). Over residues 63-72 (KPWKQKHTGR) the composition is skewed to basic residues.

Belongs to the universal ribosomal protein uL4 family. As to quaternary structure, part of the 50S ribosomal subunit.

One of the primary rRNA binding proteins, this protein initially binds near the 5'-end of the 23S rRNA. It is important during the early stages of 50S assembly. It makes multiple contacts with different domains of the 23S rRNA in the assembled 50S subunit and ribosome. Functionally, forms part of the polypeptide exit tunnel. The chain is Large ribosomal subunit protein uL4 from Anaeromyxobacter dehalogenans (strain 2CP-1 / ATCC BAA-258).